Reading from the N-terminus, the 198-residue chain is Carnitine operon protein CaiE (198 aa).

The interval 179-198 (VEENRPRLKGTTDVKPKSAQ) is disordered. A compositionally biased stretch (basic and acidic residues) spans 180 to 198 (EENRPRLKGTTDVKPKSAQ).

The protein belongs to the transferase hexapeptide repeat family.

The protein operates within amine and polyamine metabolism; carnitine metabolism. Functionally, overproduction of CaiE stimulates the activity of CaiB and CaiD. The chain is Carnitine operon protein CaiE from Salmonella choleraesuis (strain SC-B67).